Consider the following 421-residue polypeptide: Histidine--tRNA ligase (421 aa).

Belongs to the class-II aminoacyl-tRNA synthetase family. Homodimer.

It localises to the cytoplasm. The enzyme catalyses tRNA(His) + L-histidine + ATP = L-histidyl-tRNA(His) + AMP + diphosphate + H(+). The sequence is that of Histidine--tRNA ligase from Coxiella burnetii (strain CbuK_Q154) (Coxiella burnetii (strain Q154)).